Consider the following 424-residue polypeptide: Kynureninase (424 aa).

Pyridoxal 5'-phosphate contacts are provided by residues Leu-109, Thr-110, 137-140 (FPSD), Asp-222, His-225, and Tyr-247. Residue Lys-248 is modified to N6-(pyridoxal phosphate)lysine. Trp-278 and Asn-306 together coordinate pyridoxal 5'-phosphate.

It belongs to the kynureninase family. As to quaternary structure, homodimer. Pyridoxal 5'-phosphate is required as a cofactor.

The enzyme catalyses L-kynurenine + H2O = anthranilate + L-alanine + H(+). The catalysed reaction is 3-hydroxy-L-kynurenine + H2O = 3-hydroxyanthranilate + L-alanine + H(+). The protein operates within amino-acid degradation; L-kynurenine degradation; L-alanine and anthranilate from L-kynurenine: step 1/1. Its pathway is cofactor biosynthesis; NAD(+) biosynthesis; quinolinate from L-kynurenine: step 2/3. Functionally, catalyzes the cleavage of L-kynurenine (L-Kyn) and L-3-hydroxykynurenine (L-3OHKyn) into anthranilic acid (AA) and 3-hydroxyanthranilic acid (3-OHAA), respectively. This is Kynureninase from Koribacter versatilis (strain Ellin345).